The primary structure comprises 102 residues: Pyrimidine/purine nucleoside phosphorylase (102 aa).

It belongs to the nucleoside phosphorylase PpnP family.

It catalyses the reaction a purine D-ribonucleoside + phosphate = a purine nucleobase + alpha-D-ribose 1-phosphate. The enzyme catalyses adenosine + phosphate = alpha-D-ribose 1-phosphate + adenine. The catalysed reaction is cytidine + phosphate = cytosine + alpha-D-ribose 1-phosphate. It carries out the reaction guanosine + phosphate = alpha-D-ribose 1-phosphate + guanine. It catalyses the reaction inosine + phosphate = alpha-D-ribose 1-phosphate + hypoxanthine. The enzyme catalyses thymidine + phosphate = 2-deoxy-alpha-D-ribose 1-phosphate + thymine. The catalysed reaction is uridine + phosphate = alpha-D-ribose 1-phosphate + uracil. It carries out the reaction xanthosine + phosphate = alpha-D-ribose 1-phosphate + xanthine. Catalyzes the phosphorolysis of diverse nucleosides, yielding D-ribose 1-phosphate and the respective free bases. Can use uridine, adenosine, guanosine, cytidine, thymidine, inosine and xanthosine as substrates. Also catalyzes the reverse reactions. The chain is Pyrimidine/purine nucleoside phosphorylase from Shewanella amazonensis (strain ATCC BAA-1098 / SB2B).